A 362-amino-acid chain; its full sequence is Protein Wnt-16 (362 aa).

An N-terminal signal peptide occupies residues 1–29 (MDRAALLGLSRLCALWAAVLALFPCGAQG). Disulfide bonds link C81/C92, C136/C144, and C146/C165. An N-linked (GlcNAc...) asparagine glycan is attached at N140. N-linked (GlcNAc...) asparagine glycosylation occurs at N186. 8 disulfide bridges follow: C218-C232, C220-C227, C291-C322, C307-C317, C321-C361, C337-C352, C339-C349, and C344-C345. A lipid anchor (O-palmitoleoyl serine; by PORCN) is attached at S224. N308 is a glycosylation site (N-linked (GlcNAc...) asparagine).

Belongs to the Wnt family. Post-translationally, palmitoleoylation is required for efficient binding to frizzled receptors. Depalmitoleoylation leads to Wnt signaling pathway inhibition.

It is found in the secreted. It localises to the extracellular space. The protein localises to the extracellular matrix. Functionally, ligand for members of the frizzled family of seven transmembrane receptors. Probable developmental protein. May be a signaling molecule which affects the development of discrete regions of tissues. Is likely to signal over only few cell diameters. The polypeptide is Protein Wnt-16 (WNT16) (Bos taurus (Bovine)).